The chain runs to 396 residues: Elongation factor Tu (396 aa).

The tr-type G domain occupies 10–205 (KPHVNIGTIG…ACDDNIPDPV (196 aa)). The segment at 19-26 (GHVDHGKT) is G1. 19–26 (GHVDHGKT) is a binding site for GTP. Thr26 provides a ligand contact to Mg(2+). The tract at residues 62–66 (GITIN) is G2. The segment at 83 to 86 (DAPG) is G3. GTP is bound by residues 83 to 87 (DAPGH) and 138 to 141 (NKCD). A G4 region spans residues 138–141 (NKCD). Residues 175 to 177 (SAL) form a G5 region.

The protein belongs to the TRAFAC class translation factor GTPase superfamily. Classic translation factor GTPase family. EF-Tu/EF-1A subfamily. In terms of assembly, monomer.

It localises to the cytoplasm. It carries out the reaction GTP + H2O = GDP + phosphate + H(+). In terms of biological role, GTP hydrolase that promotes the GTP-dependent binding of aminoacyl-tRNA to the A-site of ribosomes during protein biosynthesis. This chain is Elongation factor Tu, found in Corynebacterium glutamicum (strain ATCC 13032 / DSM 20300 / JCM 1318 / BCRC 11384 / CCUG 27702 / LMG 3730 / NBRC 12168 / NCIMB 10025 / NRRL B-2784 / 534).